Here is a 251-residue protein sequence, read N- to C-terminus: Triosephosphate isomerase (251 aa).

A substrate-binding site is contributed by 9-11 (NWK). His95 serves as the catalytic Electrophile. The active-site Proton acceptor is the Glu167. Residues Gly173, Ser213, and 234–235 (GG) contribute to the substrate site. Ser213 is modified (phosphoserine).

This sequence belongs to the triosephosphate isomerase family. As to quaternary structure, homodimer.

The protein localises to the cytoplasm. It catalyses the reaction D-glyceraldehyde 3-phosphate = dihydroxyacetone phosphate. Its pathway is carbohydrate biosynthesis; gluconeogenesis. It participates in carbohydrate degradation; glycolysis; D-glyceraldehyde 3-phosphate from glycerone phosphate: step 1/1. Its function is as follows. Involved in the gluconeogenesis. Catalyzes stereospecifically the conversion of dihydroxyacetone phosphate (DHAP) to D-glyceraldehyde-3-phosphate (G3P). In Bacillus cereus (strain B4264), this protein is Triosephosphate isomerase.